Consider the following 383-residue polypeptide: Succinyl-diaminopimelate desuccinylase (383 aa).

His-69 is a binding site for Zn(2+). Asp-71 is an active-site residue. A Zn(2+)-binding site is contributed by Asp-103. The active-site Proton acceptor is the Glu-137. Glu-138, Glu-166, and His-357 together coordinate Zn(2+).

This sequence belongs to the peptidase M20A family. DapE subfamily. As to quaternary structure, homodimer. Zn(2+) serves as cofactor. Requires Co(2+) as cofactor.

The catalysed reaction is N-succinyl-(2S,6S)-2,6-diaminopimelate + H2O = (2S,6S)-2,6-diaminopimelate + succinate. The protein operates within amino-acid biosynthesis; L-lysine biosynthesis via DAP pathway; LL-2,6-diaminopimelate from (S)-tetrahydrodipicolinate (succinylase route): step 3/3. Catalyzes the hydrolysis of N-succinyl-L,L-diaminopimelic acid (SDAP), forming succinate and LL-2,6-diaminopimelate (DAP), an intermediate involved in the bacterial biosynthesis of lysine and meso-diaminopimelic acid, an essential component of bacterial cell walls. The polypeptide is Succinyl-diaminopimelate desuccinylase (Rickettsia prowazekii (strain Madrid E)).